The sequence spans 495 residues: Neuronal acetylcholine receptor subunit alpha-3 (495 aa).

The first 21 residues, 1-21, serve as a signal peptide directing secretion; that stretch reads MARRSRLRRLLLLLLLPVAST. The Extracellular portion of the chain corresponds to 22–240; that stretch reads SDAEHRLFER…PLFYTINLII (219 aa). N-linked (GlcNAc...) asparagine glycosylation is found at Asn-45 and Asn-162. 2 disulfides stabilise this stretch: Cys-149–Cys-163 and Cys-213–Cys-214. Residues 241 to 256 form a helical membrane-spanning segment; that stretch reads PCLLISFLTVLVFYLP. Residues 257 to 258 are Cytoplasmic-facing; sequence SD. The helical transmembrane segment at 259–275 threads the bilayer; it reads CGEKVTLCISVLLSLTV. Glu-261 is a Na(+) binding site. Residues 276–297 lie on the Extracellular side of the membrane; sequence FLLVITETIPSTSLVIPLIGEY. The chain crosses the membrane as a helical span at residues 298 to 316; sequence LLFTMIFVTLSIVITVFVL. The Cytoplasmic segment spans residues 317-464; the sequence is NVHYRTPTTH…QDDWKYVAMV (148 aa). 2 positions are modified to phosphoserine: Ser-403 and Ser-406. The helical transmembrane segment at 465–483 threads the bilayer; that stretch reads IDRIFLWVFILVCILGTAG. The Extracellular segment spans residues 484–495; the sequence is LFLQPLMTRDDA.

The protein belongs to the ligand-gated ion channel (TC 1.A.9) family. Acetylcholine receptor (TC 1.A.9.1) subfamily. Alpha-3/CHRNA3 sub-subfamily. In terms of assembly, neuronal AChR is composed of two different types of subunits: alpha and beta. CHRNA3/Alpha-3 subunit can be combined to CHRNB2/beta-2 or CHRNB4/beta-4 to give rise to functional receptors. Part of a complex composed of STUB1/CHIP, VCP/p97, CHRNA3, and UBXN2A that modulates the ubiquitination and endoplasmic reticulum-associated degradation (ERAD) of CHRNA3. Within the complex UBXN2A acts as a scaffold protein required for the interaction of CHRNA3 with VCP/p97, this interaction also inhibits CHRNA3 ubiquitination by STUB1/CHIP and subsequently ERAD. Interacts with UBXN2A (via SEP domain), the interaction is required for the interaction of CHRNA3 in the STUB1:VCP:UBXN2A complex. Interacts with RIC3; which is required for proper folding and assembly. Interacts with LYPD6. Ubiquitinated; by STUB1/CHIP and thereafter degraded by the 26S proteosome complex.

Its subcellular location is the synaptic cell membrane. The protein resides in the cell membrane. The protein localises to the endoplasmic reticulum. It localises to the golgi apparatus. The catalysed reaction is K(+)(in) = K(+)(out). The enzyme catalyses Na(+)(in) = Na(+)(out). It carries out the reaction Ca(2+)(in) = Ca(2+)(out). Its activity is regulated as follows. Activated by a myriad of ligands such as acetylcholine, cytisine, nicotine, choline and epibatidine. The heteropentamer CHRNA3:CHRNB2 activity is blocked by alpha-conotoxins ImI, ImII, PnIA, GID and MII. The heteropentamer CHRNA3:CHRNB4 activity is blocked by the alpha-conotoxin ImI and AuIB. Its function is as follows. Component of neuronal acetylcholine receptors (nAChRs) that function as pentameric, ligand-gated cation channels with high calcium permeability among other activities. nAChRs are excitatory neurotrasnmitter receptors formed by a collection of nAChR subunits known to mediate synaptic transmission in the nervous system and the neuromuscular junction. Each nAchR subunit confers differential attributes to channel properties, including activation, deactivation and desensitization kinetics, pH sensitivity, cation permeability, and binding to allosteric modulators. CHRNA3 forms heteropentameric neuronal acetylcholine receptors with CHRNB2 and CHRNB4. CHRNA3:CHRNB4 being predominant in neurons of the autonomic ganglia, it is known as ganglionic nicotinic receptor. CHRNA3:CHRNB4 also plays an important role in the habenulo-interpeduncular tract, modulating the mesolimbic dopamine system and affecting reward circuits and addiction. Hypothalamic CHRNA3:CHRNB4 nAChR activation by nicotine leads to activation of POMC neurons and a decrease in food intake. Also expressed in the urothelium where it modulates reflex bladder activity by increasing intracellular calcium through extracellular influx and basal ATP release. The protein is Neuronal acetylcholine receptor subunit alpha-3 (CHRNA3) of Bos taurus (Bovine).